Reading from the N-terminus, the 320-residue chain is 4-diphosphocytidyl-2-C-methyl-D-erythritol kinase (320 aa).

Residue Lys20 is part of the active site. ATP is bound at residue 112–122 (PVAGGMGGGSA). Asp154 is an active-site residue.

The protein belongs to the GHMP kinase family. IspE subfamily.

The catalysed reaction is 4-CDP-2-C-methyl-D-erythritol + ATP = 4-CDP-2-C-methyl-D-erythritol 2-phosphate + ADP + H(+). It participates in isoprenoid biosynthesis; isopentenyl diphosphate biosynthesis via DXP pathway; isopentenyl diphosphate from 1-deoxy-D-xylulose 5-phosphate: step 3/6. Functionally, catalyzes the phosphorylation of the position 2 hydroxy group of 4-diphosphocytidyl-2C-methyl-D-erythritol. This chain is 4-diphosphocytidyl-2-C-methyl-D-erythritol kinase, found in Pseudarthrobacter chlorophenolicus (strain ATCC 700700 / DSM 12829 / CIP 107037 / JCM 12360 / KCTC 9906 / NCIMB 13794 / A6) (Arthrobacter chlorophenolicus).